The following is a 320-amino-acid chain: 4-diphosphocytidyl-2-C-methyl-D-erythritol kinase (320 aa).

Residue lysine 26 is part of the active site. 111–121 (PVAGGMAGGSA) lines the ATP pocket. Aspartate 153 is an active-site residue.

It belongs to the GHMP kinase family. IspE subfamily.

The enzyme catalyses 4-CDP-2-C-methyl-D-erythritol + ATP = 4-CDP-2-C-methyl-D-erythritol 2-phosphate + ADP + H(+). Its pathway is isoprenoid biosynthesis; isopentenyl diphosphate biosynthesis via DXP pathway; isopentenyl diphosphate from 1-deoxy-D-xylulose 5-phosphate: step 3/6. In terms of biological role, catalyzes the phosphorylation of the position 2 hydroxy group of 4-diphosphocytidyl-2C-methyl-D-erythritol. The sequence is that of 4-diphosphocytidyl-2-C-methyl-D-erythritol kinase from Mycobacterium marinum (strain ATCC BAA-535 / M).